A 701-amino-acid chain; its full sequence is MSAKSTPDAGPQEQATEAEAELRHRWQALADEVRDHQFRYYVRDAPVISDADFDKLFQQLEALEAEHPELRAPDSPTQLVGGAGFATDFTPAEHLERMLSLDDVFNVDELTAWSSRVRAEVGDDAAYLCELKVDGLALALVYRDGRLERAATRGDGRVGEDVTLNARTLDDVPERLTPSDEFPHPAVLEVRGEVFFRVADFEALNAGLVAEGKPPFANPRNSAAGSLRQKNPAVTARRPLRMVCHGIGYTEGFSPTSLHEAYGALRAWGLPVSDHTTRVQGMDAVRERIAYWGEHRHDIEHEIDGVVVKLDQIALQRRLGATSRAPRWAVAYKYPPEEAQTKLLDIRVNVGRTGRVTPFAYMEPVKVAGSTVGLATLHNASEVKRKGVLIGDTVVIRKAGDVIPEVLGPVVDLRDGTEREFVMPTHCPECGTELAPAKEGDADIRCPNSRTCPAQLRERVFHVAGRGAFDIEGLGYEAAIALLQAGVITDEGDLFTLTEDDLLRTELFTTKGGAVSANGRRLLANLGKAKAQPLWRVLVALSIRHVGPTAARALATEFGSLDAIIEASEDQLAAVEGVGPTIAAAVKEWFTVDWHCAIVEKWRAAGVRMADERDASIARTLEGLSIVVTGSLAGFSRDEAKEAIIARGGKAAGSVSKKTAYVVAGDSPGSKYDKAIDLGVPVLDEDGFRNLLENGPQAPEG.

The tract at residues 1–21 is disordered; that stretch reads MSAKSTPDAGPQEQATEAEAE. Residues 50-54, 100-101, and glutamate 130 contribute to the NAD(+) site; these read DADFD and SL. Residue lysine 132 is the N6-AMP-lysine intermediate of the active site. 4 residues coordinate NAD(+): arginine 153, glutamate 193, lysine 309, and lysine 333. Zn(2+)-binding residues include cysteine 427, cysteine 430, cysteine 446, and cysteine 452. The region spanning 616 to 701 is the BRCT domain; it reads SIARTLEGLS…LENGPQAPEG (86 aa).

It belongs to the NAD-dependent DNA ligase family. LigA subfamily. Mg(2+) serves as cofactor. Mn(2+) is required as a cofactor.

The catalysed reaction is NAD(+) + (deoxyribonucleotide)n-3'-hydroxyl + 5'-phospho-(deoxyribonucleotide)m = (deoxyribonucleotide)n+m + AMP + beta-nicotinamide D-nucleotide.. Functionally, DNA ligase that catalyzes the formation of phosphodiester linkages between 5'-phosphoryl and 3'-hydroxyl groups in double-stranded DNA using NAD as a coenzyme and as the energy source for the reaction. It is essential for DNA replication and repair of damaged DNA. The sequence is that of DNA ligase from Mycobacterium sp. (strain KMS).